Here is a 353-residue protein sequence, read N- to C-terminus: UPF0283 membrane protein YPTS_2342 (353 aa).

The next 3 membrane-spanning stretches (helical) occupy residues 71 to 91, 101 to 121, and 214 to 234; these read MVTA…VQWV, IALG…GSVV, and ESAL…FIAW.

The protein belongs to the UPF0283 family.

The protein localises to the cell inner membrane. This is UPF0283 membrane protein YPTS_2342 from Yersinia pseudotuberculosis serotype IB (strain PB1/+).